The following is a 138-amino-acid chain: Basic phospholipase A2 PL-Y (138 aa).

The N-terminal stretch at 1-16 (MRTLWIMAVLLVGVEG) is a signal peptide. 7 disulfides stabilise this stretch: cysteine 42/cysteine 131, cysteine 44/cysteine 60, cysteine 59/cysteine 111, cysteine 65/cysteine 138, cysteine 66/cysteine 104, cysteine 73/cysteine 97, and cysteine 91/cysteine 102. Positions 43, 45, and 47 each coordinate Ca(2+). The active site involves histidine 63. Ca(2+) is bound at residue aspartate 64. Aspartate 105 is a catalytic residue.

This sequence belongs to the phospholipase A2 family. Group II subfamily. D49 sub-subfamily. The cofactor is Ca(2+). In terms of tissue distribution, expressed by the venom gland.

The protein resides in the secreted. The catalysed reaction is a 1,2-diacyl-sn-glycero-3-phosphocholine + H2O = a 1-acyl-sn-glycero-3-phosphocholine + a fatty acid + H(+). Snake venom phospholipase A2 (PLA2) that can cleave arachidonate at the sn-2 position from phospholipides in the micellar state or in bilayer membranes. PLA2 catalyzes the calcium-dependent hydrolysis of the 2-acyl groups in 3-sn-phosphoglycerides. This is Basic phospholipase A2 PL-Y from Protobothrops flavoviridis (Habu).